The chain runs to 639 residues: MSSTMFVKRNPIRETTAGKISSPSSPTLNVAVAHIRAGSYYEIDASILPQRSPENLKSIRVVMVSKITASDVSLRYPSMFSLRSHFDYSRMNRNKPMKKRSGGGLLPVFDESHVMASELAGDLLYRRIAPHELSMNRNSWGFWVSSSSRRNKFPRREVVSQPAYNTRLCRAASPEGKCSSELKSGGMIKWGRRLRVQYQSRHIDTRKNKEGEESSRVKDEVYKEEEMEKEEDDDDGNEIGGTKQEAKEITNGNRKRKLIESSTERLAQKAKVYDQKKETQIVVYKRKSERKFIDRWSVERYKLAERNMLKVMKEKNAVFGNSILRPELRSEARKLIGDTGLLDHLLKHMAGKVAPGGQDRFMRKHNADGAMEYWLESSDLIHIRKEAGVKDPYWTPPPGWKLGDNPSQDPVCAGEIRDIREELASLKRELKKLASKKEEEELVIMTTPNSCVTSQNDNLMTPAKEIYADLLKKKYKIEDQLVIIGETLRKMEEDMGWLKKTVDENYPKKPDSTETPLLLEDSPPIQTLEGEVKVVNKGNQITESPQNREKGRKHDQQERSPLSLISNTGFRICRPVGMFAWPQLPALAAATDTNASSPSHRQAYPSPFPVKPLAAKRPLGLTFPFTIIPEEAPKNLFNV.

The segment covering 201-226 (RHIDTRKNKEGEESSRVKDEVYKEEE) has biased composition (basic and acidic residues). A disordered region spans residues 201–256 (RHIDTRKNKEGEESSRVKDEVYKEEEMEKEEDDDDGNEIGGTKQEAKEITNGNRKR). The segment covering 227–237 (MEKEEDDDDGN) has biased composition (acidic residues). One can recognise a PI-PLC X-box domain in the interval 351 to 498 (GKVAPGGQDR…RKMEEDMGWL (148 aa)). Residues 536-561 (NKGNQITESPQNREKGRKHDQQERSP) form a disordered region. Residues 546–558 (QNREKGRKHDQQE) are compositionally biased toward basic and acidic residues.

Meiocytes (at protein level).

It is found in the nucleus. Its function is as follows. Required for fertility. Involved in chromatid cohesion establishment, in chromosome structure during male and female meiosis (e.g. the synapse formation between homologous chromosomes, the recombination, and the cohesion of both chromatid arm and centromere), and in axial element formation. Regulates the switch from mitosis to the reductional meiosis division of megaspores prior to the female gametogenesis (megasporogenesis). The chain is Protein DYAD (DYAD) from Arabidopsis thaliana (Mouse-ear cress).